The primary structure comprises 379 residues: Oxidoreductase chry3 (379 aa).

Disordered stretches follow at residues 1–23 and 126–150; these read MTTATKPHQGRFRYLTRGSQPTP and EGDDSAPAEEEADTQASSSDDTSHM. Residues 126-138 are compositionally biased toward acidic residues; sequence EGDDSAPAEEEAD.

The protein belongs to the asaB hydroxylase/desaturase family.

It functions in the pathway pigment biosynthesis. Oxidoreductase; part of the gene cluster that mediates the biosynthesis of the yellow pigment chrysogine. Pyruvic acid and anthranilic acid are likely substrates for the nonribosomal peptide synthetase chry1/NRPS14, with pyruvic acid adenylated by the first A domain and anthranilic acid by the second. If pyruvic acid and anthranilic acid are merged and released from chry1/NRPS14 by hydrolysis, a subsequent amidation would lead to 2-pyruvoylaminobenzamide. This process is probably catalyzed by the amidotransferase chry2 using glutamine as amino donor. The dehydrogenase chry5 that has a terminal berberine bridge domain for C-N cyclization could catalyze the cyclization of 2-pyruvoylaminobenzamide to yield acetyl-4(3H)-quinazolidinone. A final reduction of acetyl-4(3H)-quinazolidinone catalyzed by the oxidoreductase chry4 would result in chrysogine. The sequence is that of Oxidoreductase chry3 from Gibberella zeae (strain ATCC MYA-4620 / CBS 123657 / FGSC 9075 / NRRL 31084 / PH-1) (Wheat head blight fungus).